The following is a 290-amino-acid chain: Cilia- and flagella-associated protein 298 (290 aa).

The protein belongs to the CFAP298 family. As to quaternary structure, interacts with ZMYND10.

The protein localises to the cytoplasm. It localises to the cytoskeleton. The protein resides in the cilium basal body. Its function is as follows. Plays a role in motile cilium function, possibly by acting on outer dynein arm assembly. Seems to be important for initiation rather than maintenance of cilium motility. Required for correct positioning of cilia at the apical cell surface, suggesting an additional role in the planar cell polarity (PCP) pathway. May suppress canonical Wnt signaling activity. This chain is Cilia- and flagella-associated protein 298, found in Mus musculus (Mouse).